A 353-amino-acid polypeptide reads, in one-letter code: Methylthioribose-1-phosphate isomerase (353 aa).

Residues 48–50, arginine 94, and glutamine 201 each bind substrate; that span reads RGA. Catalysis depends on aspartate 242, which acts as the Proton donor. Position 252-253 (252-253) interacts with substrate; it reads NK.

Belongs to the eIF-2B alpha/beta/delta subunits family. MtnA subfamily.

The enzyme catalyses 5-(methylsulfanyl)-alpha-D-ribose 1-phosphate = 5-(methylsulfanyl)-D-ribulose 1-phosphate. The protein operates within amino-acid biosynthesis; L-methionine biosynthesis via salvage pathway; L-methionine from S-methyl-5-thio-alpha-D-ribose 1-phosphate: step 1/6. In terms of biological role, catalyzes the interconversion of methylthioribose-1-phosphate (MTR-1-P) into methylthioribulose-1-phosphate (MTRu-1-P). In Roseiflexus sp. (strain RS-1), this protein is Methylthioribose-1-phosphate isomerase.